The primary structure comprises 911 residues: Protein translocase subunit SecA (911 aa).

ATP contacts are provided by residues Q87, G105 to T109, and D512. Residues A861–E893 are disordered. Residues C895, C897, C906, and H907 each coordinate Zn(2+).

The protein belongs to the SecA family. As to quaternary structure, monomer and homodimer. Part of the essential Sec protein translocation apparatus which comprises SecA, SecYEG and auxiliary proteins SecDF-YajC and YidC. Requires Zn(2+) as cofactor.

The protein localises to the cell inner membrane. It is found in the cytoplasm. The catalysed reaction is ATP + H2O + cellular proteinSide 1 = ADP + phosphate + cellular proteinSide 2.. Functionally, part of the Sec protein translocase complex. Interacts with the SecYEG preprotein conducting channel. Has a central role in coupling the hydrolysis of ATP to the transfer of proteins into and across the cell membrane, serving both as a receptor for the preprotein-SecB complex and as an ATP-driven molecular motor driving the stepwise translocation of polypeptide chains across the membrane. The polypeptide is Protein translocase subunit SecA (Pseudomonas putida (strain ATCC 700007 / DSM 6899 / JCM 31910 / BCRC 17059 / LMG 24140 / F1)).